Consider the following 240-residue polypeptide: Citrate synthase-lysine N-methyltransferase CSKMT, mitochondrial (240 aa).

The N-terminal 28 residues, 1 to 28, are a transit peptide targeting the mitochondrion; it reads MAALRRMLHLPSLMMGTCRPFAGSLADS.

Belongs to the methyltransferase superfamily.

It localises to the mitochondrion. It catalyses the reaction L-lysyl-[citrate synthase] + S-adenosyl-L-methionine = N(6)-methyl-L-lysyl-[citrate synthase] + S-adenosyl-L-homocysteine + H(+). The enzyme catalyses N(6)-methyl-L-lysyl-[citrate synthase] + S-adenosyl-L-methionine = N(6),N(6)-dimethyl-L-lysyl-[citrate synthase] + S-adenosyl-L-homocysteine + H(+). The catalysed reaction is N(6),N(6)-dimethyl-L-lysyl-[citrate synthase] + S-adenosyl-L-methionine = N(6),N(6),N(6)-trimethyl-L-lysyl-[citrate synthase] + S-adenosyl-L-homocysteine + H(+). Citrate synthase-lysine methyltransferase activity is inhibited by S-adenosylhomocysteine (AdoHcy) and oxaloacetate (OAA). In terms of biological role, protein-lysine methyltransferase that selectively trimethylates citrate synthase (CS) in mitochondria. Seems to conduct trimethylation in a highly distributive manner rather than in a processive manner, and thus introduces a single methyl group per binding event. This is Citrate synthase-lysine N-methyltransferase CSKMT, mitochondrial from Homo sapiens (Human).